The primary structure comprises 102 residues: Small ribosomal subunit protein uS10 (102 aa).

Belongs to the universal ribosomal protein uS10 family. In terms of assembly, part of the 30S ribosomal subunit.

In terms of biological role, involved in the binding of tRNA to the ribosomes. The sequence is that of Small ribosomal subunit protein uS10 from Streptococcus thermophilus (strain ATCC BAA-491 / LMD-9).